Here is a 363-residue protein sequence, read N- to C-terminus: Isopentenyl-diphosphate delta-isomerase (363 aa).

6–7 (RK) provides a ligand contact to substrate. FMN is bound by residues 64 to 66 (AMT), S94, and N123. Q153 provides a ligand contact to substrate. E154 serves as a coordination point for Mg(2+). Residues K185, S210, T215, 259–261 (GVR), and 280–281 (SA) each bind FMN.

This sequence belongs to the IPP isomerase type 2 family. As to quaternary structure, homooctamer. Dimer of tetramers. The cofactor is Mg(2+). FMN serves as cofactor. Requires NADPH as cofactor.

The protein resides in the cytoplasm. It carries out the reaction isopentenyl diphosphate = dimethylallyl diphosphate. Involved in the biosynthesis of isoprenoids. Catalyzes the 1,3-allylic rearrangement of the homoallylic substrate isopentenyl (IPP) to its allylic isomer, dimethylallyl diphosphate (DMAPP). This Streptomyces sp. (strain CL190) protein is Isopentenyl-diphosphate delta-isomerase.